Here is a 309-residue protein sequence, read N- to C-terminus: Mitochondrial brown fat uncoupling protein 1 (309 aa).

The Mitochondrial intermembrane segment spans residues 2-10; sequence VGHTESDVP. Residues 11–32 traverse the membrane as a helical segment; the sequence is PTMAVKIFSAGVAACVADIITF. Solcar repeat units lie at residues 11–106, 113–203, and 212–297; these read PTMA…VQEF, ASLG…MKEA, and DDVP…LKQE. At 33–77 the chain is on the mitochondrial matrix side; sequence PLDTAKVRLQVGSAIQGECLISSAIRYKGVLGTIITLAKTEGPVK. Residue Lys-60 participates in fatty acid 16:0 binding. A helical membrane pass occupies residues 78–100; that stretch reads LYSGLPAGLQRQISFASLRIGLY. The Mitochondrial intermembrane segment spans residues 101–118; it reads DTVQEFFTTGKEASLGSK. The helical transmembrane segment at 119-135 threads the bilayer; sequence ISAGLMTGGVAVFIGQP. Residues 136 to 180 lie on the Mitochondrial matrix side of the membrane; sequence TEVVKVRLQAQSHLHGPKPRYTGTYNAYRIIATTEGLTGLWKGTT. The chain crosses the membrane as a helical span at residues 181–197; the sequence is PNLTRNVIINCTELVTY. Residues 198–214 are Mitochondrial intermembrane-facing; the sequence is DLMKEALVKNKLLADDV. The helical transmembrane segment at 215-234 threads the bilayer; that stretch reads PCHFVSAVVAGFCTTVLSSP. Topologically, residues 235–268 are mitochondrial matrix; the sequence is VDVVKTRFVNSSPGQYTSVPNCAMMMLTREGPSA. At Cys-256 the chain carries Cysteine sulfenic acid (-SOH). Residues 269–291 form a helical membrane-spanning segment; that stretch reads FFKGFVPSFLRLGSWNIIMFVCF. Lys-271 is a binding site for fatty acid 16:0. Residues 292–309 lie on the Mitochondrial intermembrane side of the membrane; that stretch reads EQLKQELMKSRHTMDCAT.

It belongs to the mitochondrial carrier (TC 2.A.29) family. In terms of assembly, most probably functions as a monomer. Binds one purine nucleotide per monomer. However, has also been suggested to function as a homodimer or a homotetramer. Tightly associates with cardiolipin in the mitochondrion inner membrane; may stabilize and regulate its activity. In terms of processing, may undergo sulfenylation upon cold exposure. May increase the sensitivity of UCP1 thermogenic function to the activation by noradrenaline probably through structural effects. May undergo ubiquitin-mediated proteasomal degradation.

The protein localises to the mitochondrion inner membrane. It catalyses the reaction H(+)(in) = H(+)(out). With respect to regulation, has no constitutive proton transporter activity and has to be activated by long-chain fatty acids/LCFAs. Inhibited by purine nucleotides. Both purine nucleotides and LCFAs bind the cytosolic side of the transporter and directly compete to activate or inhibit it. Activated by noradrenaline and reactive oxygen species. Despite lacking canonical translational encoding for selenocysteine, a small pool of the protein has been observed to selectively incorporate selenocysteine at 'Cys-256'. Selenocysteine-modified protein is highly sensitive to redox modification and may constitute a pool of protein highly sensitive to activation by elevated levels of reactive oxygen species (ROS). Functionally, mitochondrial protein responsible for thermogenic respiration, a specialized capacity of brown adipose tissue and beige fat that participates in non-shivering adaptive thermogenesis to temperature and diet variations and more generally to the regulation of energy balance. Functions as a long-chain fatty acid/LCFA and proton symporter, simultaneously transporting one LCFA and one proton through the inner mitochondrial membrane. However, LCFAs remaining associated with the transporter via their hydrophobic tails, it results in an apparent transport of protons activated by LCFAs. Thereby, dissipates the mitochondrial proton gradient and converts the energy of substrate oxydation into heat instead of ATP. Regulates the production of reactive oxygen species/ROS by mitochondria. This Bos taurus (Bovine) protein is Mitochondrial brown fat uncoupling protein 1.